Reading from the N-terminus, the 241-residue chain is Demethylmenaquinone methyltransferase (241 aa).

Residues Thr-60, Asp-81, and 106-107 (DA) each bind S-adenosyl-L-methionine.

Belongs to the class I-like SAM-binding methyltransferase superfamily. MenG/UbiE family.

The enzyme catalyses a 2-demethylmenaquinol + S-adenosyl-L-methionine = a menaquinol + S-adenosyl-L-homocysteine + H(+). The protein operates within quinol/quinone metabolism; menaquinone biosynthesis; menaquinol from 1,4-dihydroxy-2-naphthoate: step 2/2. Functionally, methyltransferase required for the conversion of demethylmenaquinol (DMKH2) to menaquinol (MKH2). The protein is Demethylmenaquinone methyltransferase of Staphylococcus aureus (strain Mu3 / ATCC 700698).